The sequence spans 182 residues: Large ribosomal subunit protein uL16 (182 aa).

The disordered stretch occupies residues 140–182 (EKPTQVGKAPPKSSFLPSDETETAAAQAGTEASSASSVTPLES). Positions 162–176 (TAAAQAGTEASSASS) are enriched in low complexity.

This sequence belongs to the universal ribosomal protein uL16 family. In terms of assembly, part of the 50S ribosomal subunit.

In terms of biological role, binds 23S rRNA and is also seen to make contacts with the A and possibly P site tRNAs. In Prochlorococcus marinus (strain SARG / CCMP1375 / SS120), this protein is Large ribosomal subunit protein uL16.